Here is a 142-residue protein sequence, read N- to C-terminus: HTH-type transcriptional regulator MntR (142 aa).

In terms of domain architecture, HTH dtxR-type spans 1–63 (MTTPSMEDYI…YEKYRGLVLT (63 aa)). Cd(2+)-binding residues include aspartate 8, glutamate 11, histidine 77, glutamate 99, glutamate 102, and histidine 103. Positions 8, 11, 77, 99, 102, and 103 each coordinate Mn(2+).

The protein belongs to the DtxR/MntR family. As to quaternary structure, homodimer.

The protein localises to the cytoplasm. With respect to regulation, DNA binding is strongly activated by Mn(2+) and Cd(2+), but it is poorly activated by non-cognate metal cations, including Co(2+), Fe(2+), Ni(2+), Ca(2+) and Zn(2+). In the strict absence of divalent transition metal ions, MntR has a low affinity for DNA. Central regulator of manganese homeostasis that regulates the expression of both manganese uptake and efflux systems. In the presence of high levels of manganese, it mediates repression of the manganese uptake systems MntH and MntABCD and activation of the efflux systems MneP and MneS. Binds with high affinity to the regulatory regions of its target genes. The manganese concentration required for activation of efflux is higher than that for repression of uptake. This Bacillus subtilis (strain 168) protein is HTH-type transcriptional regulator MntR.